Consider the following 351-residue polypeptide: Glycerol-3-phosphate dehydrogenase 1-like protein (351 aa).

12–17 (GSGNWG) provides a ligand contact to NAD(+). K122 is a substrate binding site. Position 155 (A155) interacts with NAD(+). K206 functions as the Proton acceptor in the catalytic mechanism. NAD(+)-binding residues include R271, K298, and Q300. 271–272 (RN) is a substrate binding site.

Belongs to the NAD-dependent glycerol-3-phosphate dehydrogenase family. Interacts with SCN5A. Most highly expressed in heart tissue, with lower levels in the skeletal muscle, kidney, lung and other organs.

Its subcellular location is the cytoplasm. The enzyme catalyses sn-glycerol 3-phosphate + NAD(+) = dihydroxyacetone phosphate + NADH + H(+). Functionally, plays a role in regulating cardiac sodium current; decreased enzymatic activity with resulting increased levels of glycerol 3-phosphate activating the DPD1L-dependent SCN5A phosphorylation pathway, may ultimately lead to decreased sodium current; cardiac sodium current may also be reduced due to alterations of NAD(H) balance induced by DPD1L. This is Glycerol-3-phosphate dehydrogenase 1-like protein from Homo sapiens (Human).